A 377-amino-acid polypeptide reads, in one-letter code: Alanine racemase (377 aa).

The Proton acceptor; specific for D-alanine role is filled by K37. K37 is subject to N6-(pyridoxal phosphate)lysine. R135 contributes to the substrate binding site. Catalysis depends on Y271, which acts as the Proton acceptor; specific for L-alanine. M319 serves as a coordination point for substrate.

The protein belongs to the alanine racemase family. Pyridoxal 5'-phosphate is required as a cofactor.

The catalysed reaction is L-alanine = D-alanine. It functions in the pathway amino-acid biosynthesis; D-alanine biosynthesis; D-alanine from L-alanine: step 1/1. In terms of biological role, catalyzes the interconversion of L-alanine and D-alanine. May also act on other amino acids. The chain is Alanine racemase (alr) from Helicobacter pylori (strain HPAG1).